Here is a 199-residue protein sequence, read N- to C-terminus: dITP/XTP pyrophosphatase (199 aa).

7–12 (SNNPGK) contributes to the substrate binding site. Aspartate 68 serves as the catalytic Proton acceptor. Aspartate 68 contacts Mg(2+). Substrate is bound by residues alanine 69, 154–157 (FGFD), lysine 177, and 182–183 (HR).

Belongs to the HAM1 NTPase family. In terms of assembly, homodimer. Mg(2+) serves as cofactor.

It carries out the reaction XTP + H2O = XMP + diphosphate + H(+). The catalysed reaction is dITP + H2O = dIMP + diphosphate + H(+). It catalyses the reaction ITP + H2O = IMP + diphosphate + H(+). Pyrophosphatase that catalyzes the hydrolysis of nucleoside triphosphates to their monophosphate derivatives, with a high preference for the non-canonical purine nucleotides XTP (xanthosine triphosphate), dITP (deoxyinosine triphosphate) and ITP. Seems to function as a house-cleaning enzyme that removes non-canonical purine nucleotides from the nucleotide pool, thus preventing their incorporation into DNA/RNA and avoiding chromosomal lesions. The sequence is that of dITP/XTP pyrophosphatase from Verminephrobacter eiseniae (strain EF01-2).